The primary structure comprises 412 residues: Gamma-glutamyl phosphate reductase (412 aa).

The protein belongs to the gamma-glutamyl phosphate reductase family.

The protein resides in the cytoplasm. It carries out the reaction L-glutamate 5-semialdehyde + phosphate + NADP(+) = L-glutamyl 5-phosphate + NADPH + H(+). It participates in amino-acid biosynthesis; L-proline biosynthesis; L-glutamate 5-semialdehyde from L-glutamate: step 2/2. Catalyzes the NADPH-dependent reduction of L-glutamate 5-phosphate into L-glutamate 5-semialdehyde and phosphate. The product spontaneously undergoes cyclization to form 1-pyrroline-5-carboxylate. The sequence is that of Gamma-glutamyl phosphate reductase from Nitratiruptor sp. (strain SB155-2).